A 913-amino-acid chain; its full sequence is Alanine--tRNA ligase (913 aa).

Residues histidine 600, histidine 604, cysteine 703, and histidine 707 each contribute to the Zn(2+) site.

The protein belongs to the class-II aminoacyl-tRNA synthetase family. It depends on Zn(2+) as a cofactor.

The protein resides in the cytoplasm. The catalysed reaction is tRNA(Ala) + L-alanine + ATP = L-alanyl-tRNA(Ala) + AMP + diphosphate. Its function is as follows. Catalyzes the attachment of alanine to tRNA(Ala) in a two-step reaction: alanine is first activated by ATP to form Ala-AMP and then transferred to the acceptor end of tRNA(Ala). Also edits incorrectly charged Ser-tRNA(Ala) and Gly-tRNA(Ala) via its editing domain. This chain is Alanine--tRNA ligase, found in Methanothrix thermoacetophila (strain DSM 6194 / JCM 14653 / NBRC 101360 / PT) (Methanosaeta thermophila).